The primary structure comprises 1332 residues: Delta-poly-L-ornithine synthetase (1332 aa).

Residues D217, E221, and T304 each coordinate L-ornithine. Residues E221, T304, G306, and T308 each coordinate D-ornithine. L-ornithine contacts are provided by V312 and S313. S313 contributes to the D-ornithine binding site. Residues 524-601 (QPQNPAEEIL…AIAALMLEQP (78 aa)) enclose the Carrier domain. At S560 the chain carries O-(pantetheine 4'-phosphoryl)serine. 6 helical membrane passes run 629-649 (LVTIPVLISINILQWLAPFFT), 664-684 (AIALSLLVYVSVIMSSFVLSI), 868-888 (VSALIIACLFFIPIFPSFLLV), 908-928 (LYYFILAIPASAMMMMITAVI), 1120-1140 (IVLPAALAIGVGYMIVLDVID), and 1151-1171 (LVALTLAGLLYGVGCFLIVAL).

This sequence belongs to the ATP-dependent AMP-binding enzyme family. It depends on pantetheine 4'-phosphate as a cofactor.

The protein localises to the cell membrane. The enzyme catalyses n L-ornithine + n ATP + H2O = N(5)-(L-ornithyl)-[N(5)-(L-ornithyl)]n-1 + n AMP + n diphosphate + n H(+). It carries out the reaction n D-ornithine + n ATP + H2O = N(5)-(D-ornithyl)-[N(5)-(D-ornithyl)]n-1 + n AMP + n diphosphate + n H(+). In terms of biological role, catalyzes the polymerization of L-ornithine, generating poly-L-ornithine composed of 7-12 amino acid units joined via isopeptide bonds between the carboxylate and the side chain amine. This polymer exhibits potent antifungal activity and thus may have a potential role in survival benefit for A.baumannii. The reaction occurs via ATP-dependent adenylation of the substrate. Can also adenylate D-ornithine with similar efficiency and thus may produce D-ornithine polymers. This is Delta-poly-L-ornithine synthetase from Acinetobacter baumannii (strain AB307-0294).